The primary structure comprises 943 residues: AP-1 complex subunit beta-1 (943 aa).

K318 is subject to N6-acetyllysine. Y574 is subject to 3'-nitrotyrosine. The disordered stretch occupies residues 584-621 (GGRGVVHKSLPPRTASSESTESPETAPAGAPAGDQPDV). Residues 594–616 (PPRTASSESTESPETAPAGAPAG) show a composition bias toward low complexity.

The protein belongs to the adaptor complexes large subunit family. In terms of assembly, adaptor protein complex 1 (AP-1) is a heterotetramer composed of two large adaptins (gamma-type subunit AP1G1 and beta-type subunit AP1B1), a medium adaptin (mu-type subunit AP1M1 or AP1M2) and a small adaptin (sigma-type subunit AP1S1 or AP1S2 or AP1S3). Widely expressed.

The protein localises to the cytoplasmic vesicle. Its subcellular location is the clathrin-coated vesicle membrane. The protein resides in the golgi apparatus. Functionally, subunit of clathrin-associated adaptor protein complex 1 that plays a role in protein sorting in the late-Golgi/trans-Golgi network (TGN) and/or endosomes. The AP complexes mediate both the recruitment of clathrin to membranes and the recognition of sorting signals within the cytosolic tails of transmembrane cargo molecules. In Mus musculus (Mouse), this protein is AP-1 complex subunit beta-1 (Ap1b1).